We begin with the raw amino-acid sequence, 386 residues long: WD repeat-containing protein 89 (386 aa).

WD repeat units lie at residues 21 to 65 (KEPT…LLRE), 68 to 107 (GSPG…EKPV), 112 to 156 (GYPS…QDLS), 167 to 207 (THSD…EEDA), 213 to 253 (NSVS…TDEP), and 318 to 357 (GHAA…KTFT).

In Mus musculus (Mouse), this protein is WD repeat-containing protein 89 (Wdr89).